Reading from the N-terminus, the 189-residue chain is Large ribosomal subunit protein uL6 (189 aa).

The protein belongs to the universal ribosomal protein uL6 family. Part of the 50S ribosomal subunit.

Functionally, this protein binds to the 23S rRNA, and is important in its secondary structure. It is located near the subunit interface in the base of the L7/L12 stalk, and near the tRNA binding site of the peptidyltransferase center. The sequence is that of Large ribosomal subunit protein uL6 from Bacteroides fragilis (strain ATCC 25285 / DSM 2151 / CCUG 4856 / JCM 11019 / LMG 10263 / NCTC 9343 / Onslow / VPI 2553 / EN-2).